Consider the following 446-residue polypeptide: Phosphoglucosamine mutase (446 aa).

Serine 103 acts as the Phosphoserine intermediate in catalysis. Serine 103, aspartate 242, aspartate 244, and aspartate 246 together coordinate Mg(2+). Serine 103 carries the post-translational modification Phosphoserine.

It belongs to the phosphohexose mutase family. The cofactor is Mg(2+). Post-translationally, activated by phosphorylation.

It carries out the reaction alpha-D-glucosamine 1-phosphate = D-glucosamine 6-phosphate. Catalyzes the conversion of glucosamine-6-phosphate to glucosamine-1-phosphate. The sequence is that of Phosphoglucosamine mutase from Vibrio campbellii (strain ATCC BAA-1116).